The chain runs to 275 residues: Phosphate import ATP-binding protein PstB (275 aa).

In terms of domain architecture, ABC transporter spans 28–270 (IDCRDIRVFY…PREKRTEDYI (243 aa)). 60-67 (GPSGCGKS) contacts ATP.

This sequence belongs to the ABC transporter superfamily. Phosphate importer (TC 3.A.1.7) family. As to quaternary structure, the complex is composed of two ATP-binding proteins (PstB), two transmembrane proteins (PstC and PstA) and a solute-binding protein (PstS).

It localises to the cell inner membrane. It catalyses the reaction phosphate(out) + ATP + H2O = ADP + 2 phosphate(in) + H(+). Its function is as follows. Part of the ABC transporter complex PstSACB involved in phosphate import. Responsible for energy coupling to the transport system. This Hyphomonas neptunium (strain ATCC 15444) protein is Phosphate import ATP-binding protein PstB.